Reading from the N-terminus, the 217-residue chain is Adenosylcobinamide-GDP ribazoletransferase (217 aa).

5 helical membrane passes run 6-26, 39-61, 95-115, 116-136, and 162-182; these read ALLS…FKCA, GPAA…LLLM, GTGG…STAS, PLQL…VAAF, and ALAV…AVAL.

This sequence belongs to the CobS family. Requires Mg(2+) as cofactor.

The protein localises to the cell membrane. The catalysed reaction is alpha-ribazole + adenosylcob(III)inamide-GDP = adenosylcob(III)alamin + GMP + H(+). It catalyses the reaction alpha-ribazole 5'-phosphate + adenosylcob(III)inamide-GDP = adenosylcob(III)alamin 5'-phosphate + GMP + H(+). It functions in the pathway cofactor biosynthesis; adenosylcobalamin biosynthesis; adenosylcobalamin from cob(II)yrinate a,c-diamide: step 7/7. Its function is as follows. Joins adenosylcobinamide-GDP and alpha-ribazole to generate adenosylcobalamin (Ado-cobalamin). Also synthesizes adenosylcobalamin 5'-phosphate from adenosylcobinamide-GDP and alpha-ribazole 5'-phosphate. This chain is Adenosylcobinamide-GDP ribazoletransferase, found in Pyrobaculum calidifontis (strain DSM 21063 / JCM 11548 / VA1).